A 108-amino-acid chain; its full sequence is Putative DNA-directed RNA polymerase subunit 1 inactive homolog (108 aa).

The chain is Putative DNA-directed RNA polymerase subunit 1 inactive homolog from Acanthamoeba polyphaga (Amoeba).